We begin with the raw amino-acid sequence, 227 residues long: Thymidine kinase 1 (227 aa).

ATP-binding positions include 15–22 (GPMFSGKT), 47–49 (DTR), and 91–94 (DEGQ). Glu-92 functions as the Proton acceptor in the catalytic mechanism. Phe-122 contributes to the substrate binding site. 2 residues coordinate Zn(2+): Cys-147 and Cys-150. Residues 166-170 (IELIG) and Tyr-175 contribute to the substrate site. Residues Cys-179 and Cys-182 each coordinate Zn(2+). Over residues 187 to 196 (QNEGNSTKPS) the composition is skewed to polar residues. Residues 187 to 227 (QNEGNSTKPSKTARHSHSQSAPSVAPLAVNINPDDHLNNDY) form a disordered region.

It belongs to the thymidine kinase family. In terms of assembly, interacts with calmodulin in the presence of Ca(2+).

The catalysed reaction is thymidine + ATP = dTMP + ADP + H(+). This is Thymidine kinase 1 from Dictyostelium discoideum (Social amoeba).